Consider the following 105-residue polypeptide: MEMKNMGNMMKQMQKMQKQMMKAQEELKEKTVEATVGGGMVTVIASGDKRILEVNISEDVVDPDDVEMLQDLIIAATNEALKKVDELVEQDLGKFTKGLNMPGMF.

A compositionally biased stretch (low complexity) spans 1–22 (MEMKNMGNMMKQMQKMQKQMMK). Residues 1 to 26 (MEMKNMGNMMKQMQKMQKQMMKAQEE) form a disordered region.

Belongs to the YbaB/EbfC family. In terms of assembly, homodimer.

It is found in the cytoplasm. The protein resides in the nucleoid. In terms of biological role, binds to DNA and alters its conformation. May be involved in regulation of gene expression, nucleoid organization and DNA protection. This Shouchella clausii (strain KSM-K16) (Alkalihalobacillus clausii) protein is Nucleoid-associated protein ABC0038.